The following is a 1605-amino-acid chain: Sister chromatid cohesion protein PDS5 homolog A (1605 aa).

HEAT repeat units follow at residues 50–89, 96–136, 146–183, 184–221, 261–298, 302–339, 341–378, 380–416, 552–591, 644–681, 723–758, 821–860, 961–1000, and 1050–1088; these read KSIQPFLDAVIKPEILNHQDKDVKLLVASCVSEITRITAP, NIMK…YRSC, DLVKEVFTTFLDVARDDHPEIVFSSMQNIMIVLLEESE, DVQEHLLLILLSKLGRNRSDVRDAARRLAMKVIEHCAP, QALSGVAPYLTGELLADKLETRLKVVGLVGELFSLPGR, EEFDSIFLEFLKRLTDRVVEVRMAILDHIKDCLLSDPL, AEASQIISALCDRLLDYDENIRKQVVAVICDVSVSALT, IPVDTMKLVAERLRDKAILVKTYTMERLTELFRVYCL, ANIWKILTNLLDPNTSITQASRIRDDMLKILSEKHSLYDF, SLFDGAEEELISFLKDDDEMMKEGTLKILAKAGGTIRE, KSLSVLYKRLVDMLEDKRYQPAVLQCLGCIAQIAMP, AGVDDLLGILKNILSFGEVSEDLESSSVDKAHLRLAAAKA, LYPHHILPYLVHALAHHSCPDVEKCKDVKEYEMIYRQLYL, and HAICELGLSIINHLTQKEPDLQGEITPVSLPPTLYKPSE. Disordered regions lie at residues 1155 to 1182 and 1203 to 1262; these read LRAQGTKTRKGKKNKSVPAEDENGKNDV and ESSN…PKVQ. A compositionally biased stretch (basic and acidic residues) spans 1211-1225; it reads SPSERAEICQRDQKG. The short motif at 1226-1233 is the Nuclear localization signal 1 element; that stretch reads NKRNVGDA. S1274 carries the phosphoserine modification. Residues 1279–1295 are compositionally biased toward basic and acidic residues; that stretch reads NVSLDSHDENSDQEKML. Disordered regions lie at residues 1279 to 1307, 1324 to 1353, and 1423 to 1605; these read NVSLDSHDENSDQEKMLESISPRKRKKSL, ERSRSAGGGDSKLKSASGSMKKRKNVSGLA, and GKTA…RTAI. Phosphoserine is present on S1299. 2 stretches are compositionally biased toward basic residues: residues 1425–1442 and 1464–1476; these read TAKKSRTSKGNSKKKRSS and KGKRTPKKNLKQL. A Nuclear localization signal 2 motif is present at residues 1426 to 1433; it reads AKKSRTSK. 3 stretches are compositionally biased toward basic and acidic residues: residues 1477 to 1495, 1514 to 1527, and 1534 to 1574; these read HPKDTPKSLSLEHEKVESR, GEEKSESEGKSLKE, and VVNK…NEME. Phosphoserine occurs at positions 1524, 1562, and 1584. The segment covering 1575–1585 has biased composition (acidic residues); that stretch reads REAEENAETSD. Position 1588 is a phosphothreonine (T1588).

The protein belongs to the PDS5 family. As to quaternary structure, interacts with the cohesin complex. Interacts with DEK3.

Its subcellular location is the nucleus. Cohesin cofactor dispensable during the meiotic division but playing an important role in DNA repair by homologous recombination (HR) probably by helping SMC5/SMC6 complex. Regulator of sister chromatid cohesion in mitosis which may stabilize cohesin complex association with chromatin. May couple sister chromatid cohesion during mitosis to DNA replication. Cohesion ensures that chromosome partitioning is accurate in both meiotic and mitotic cells and plays an important role in DNA repair. The protein is Sister chromatid cohesion protein PDS5 homolog A of Arabidopsis thaliana (Mouse-ear cress).